We begin with the raw amino-acid sequence, 530 residues long: GMP synthase [glutamine-hydrolyzing] (530 aa).

A Glutamine amidotransferase type-1 domain is found at 4-205 (RILILDYGSQ…VKDICGCEGD (202 aa)). Cys84 serves as the catalytic Nucleophile. Residues His179 and Glu181 contribute to the active site. Residues 206-398 (WNMPDYISEA…LGLPPQMVYR (193 aa)) form the GMPS ATP-PPase domain. 233–239 (SGGVDSS) is an ATP binding site.

Homodimer.

The enzyme catalyses XMP + L-glutamine + ATP + H2O = GMP + L-glutamate + AMP + diphosphate + 2 H(+). It functions in the pathway purine metabolism; GMP biosynthesis; GMP from XMP (L-Gln route): step 1/1. Catalyzes the synthesis of GMP from XMP. This is GMP synthase [glutamine-hydrolyzing] from Bordetella bronchiseptica (strain ATCC BAA-588 / NCTC 13252 / RB50) (Alcaligenes bronchisepticus).